A 179-amino-acid chain; its full sequence is FADH(2)-dependent resorcinol hydroxylase, reductase component (179 aa).

Belongs to the non-flavoprotein flavin reductase family. The FADH(2)-dependent resorcinol hydroxylase is composed of two subunits, GraA (the oxygenase component) and GraD (the reductase component). Both subunits are required for activity.

The catalysed reaction is FADH2 + NAD(+) = FAD + NADH + 2 H(+). It functions in the pathway aromatic compound metabolism. In terms of biological role, involved in the gamma-resorcylate (2,6-dihydroxybenzoate) catabolism. Reductase component of the resorcinol hydroxylase, which catalyzes the FADPH-dependent conversion of resorcinol to hydroxyquinol. Catalyzes the reduction of FAD by NADH. The reduced flavin is then transferred to the oxygenase component GraA. The polypeptide is FADH(2)-dependent resorcinol hydroxylase, reductase component (Rhizobium sp. (strain MTP-10005)).